We begin with the raw amino-acid sequence, 389 residues long: Acetylornithine deacetylase (389 aa).

His-85 is a Zn(2+) binding site. Residue Asp-87 is part of the active site. Asp-117 contributes to the Zn(2+) binding site. Glu-149 is a catalytic residue. Glu-150, Glu-174, and His-360 together coordinate Zn(2+).

It belongs to the peptidase M20A family. ArgE subfamily. As to quaternary structure, homodimer. Requires Zn(2+) as cofactor. Co(2+) serves as cofactor. The cofactor is glutathione.

The protein resides in the cytoplasm. The catalysed reaction is N(2)-acetyl-L-ornithine + H2O = L-ornithine + acetate. Its pathway is amino-acid biosynthesis; L-arginine biosynthesis; L-ornithine from N(2)-acetyl-L-ornithine (linear): step 1/1. Its function is as follows. Catalyzes the hydrolysis of the amide bond of N(2)-acetylated L-amino acids. Cleaves the acetyl group from N-acetyl-L-ornithine to form L-ornithine, an intermediate in L-arginine biosynthesis pathway, and a branchpoint in the synthesis of polyamines. This Yersinia pseudotuberculosis serotype O:1b (strain IP 31758) protein is Acetylornithine deacetylase.